A 480-amino-acid polypeptide reads, in one-letter code: ATP synthase subunit beta 1 (480 aa).

An ATP-binding site is contributed by 154–161 (GGAGVGKT).

The protein belongs to the ATPase alpha/beta chains family. As to quaternary structure, F-type ATPases have 2 components, CF(1) - the catalytic core - and CF(0) - the membrane proton channel. CF(1) has five subunits: alpha(3), beta(3), gamma(1), delta(1), epsilon(1). CF(0) has four main subunits: a(1), b(1), b'(1) and c(9-12).

It localises to the cell inner membrane. The catalysed reaction is ATP + H2O + 4 H(+)(in) = ADP + phosphate + 5 H(+)(out). Its function is as follows. Produces ATP from ADP in the presence of a proton gradient across the membrane. The catalytic sites are hosted primarily by the beta subunits. This Bradyrhizobium sp. (strain BTAi1 / ATCC BAA-1182) protein is ATP synthase subunit beta 1.